We begin with the raw amino-acid sequence, 585 residues long: Regulator of gene activity (585 aa).

Over residues 42–56 (FQTDFANSYPGTANY) the composition is skewed to polar residues. Disordered stretches follow at residues 42-93 (FQTD…GNRN), 148-191 (GGGG…PGSK), and 349-394 (GVGG…KVTN). Residues 58-71 (QAPQQQQQQQQQPQ) show a composition bias toward low complexity. Polar residues predominate over residues 166-184 (PSLTNARGQNDQTLPQSNP). Residues 349 to 367 (GVGGGLGSGSGSSGSGAGG) show a composition bias toward gly residues. A compositionally biased stretch (polar residues) spans 372 to 388 (DNSSNDKLVKSGVQTSP).

This sequence belongs to the CNOT2/3/5 family. Component of the CCR4-NOT complex composed of at least Pop2/Caf1-55, Ccr4, Not1, Rga/Not2, and Not3. Expressed in heterogeneous levels between adjacent germline stem cells (at protein level).

It localises to the cytoplasm. In terms of biological role, component of the CCR4-NOT complex which is one of the major cellular mRNA deadenylases and is linked to various cellular processes including bulk mRNA degradation, miRNA-mediated repression, translational repression during translational initiation and general transcription regulation. Additional complex functions may be a consequence of its influence on mRNA expression. Essential for viability. Acts as a suppressor of position effect variegation (PEV) at the white locus and regulates the expression of several unrelated genes. Plays a role in germline stem cell differentiation in the ovaries. In Drosophila melanogaster (Fruit fly), this protein is Regulator of gene activity.